A 104-amino-acid chain; its full sequence is Protein MGF 110-2L (104 aa).

Positions 1-31 are cleaved as a signal peptide; that stretch reads MRFFSYLGLLLAGLTSLQGFSTDNLLEEELR.

It belongs to the asfivirus MGF 110 family.

Its function is as follows. Plays a role in virus cell tropism, and may be required for efficient virus replication in macrophages. This is Protein MGF 110-2L from African swine fever virus (strain Badajoz 1971 Vero-adapted) (Ba71V).